A 572-amino-acid polypeptide reads, in one-letter code: Laccase-3 (572 aa).

The first 18 residues, 1 to 18, serve as a signal peptide directing secretion; it reads MARTTFLVSVSLFVSAVL. 2 Plastocyanin-like domains span residues 21–145 and 157–304; these read TVEY…LVIY and IDDE…LIYE. Positions 82, 84, 127, and 129 each coordinate Cu cation. Residues Cys-103 and Cys-561 are joined by a disulfide bond. Asn-182, Asn-228, Asn-294, Asn-367, and Asn-405 each carry an N-linked (GlcNAc...) asparagine glycan. Residues 422–540 enclose the Plastocyanin-like 3 domain; the sequence is DMPTLLKILT…EGFAMVFAEA (119 aa). Residues His-470, His-473, His-475, His-522, Cys-523, His-524, and His-528 each coordinate Cu cation.

Belongs to the multicopper oxidase family. Homodimer. Requires Cu cation as cofactor. As to expression, in mycelia, at a lower level than LCC4.

Its subcellular location is the secreted. It catalyses the reaction 4 hydroquinone + O2 = 4 benzosemiquinone + 2 H2O. Lignin degradation and detoxification of lignin-derived products. This is Laccase-3 (LCC3) from Thanatephorus cucumeris (Black scurf of potato).